Here is a 306-residue protein sequence, read N- to C-terminus: Porphobilinogen deaminase (306 aa).

Cys-234 is subject to S-(dipyrrolylmethanemethyl)cysteine.

Belongs to the HMBS family. As to quaternary structure, monomer. It depends on dipyrromethane as a cofactor.

The catalysed reaction is 4 porphobilinogen + H2O = hydroxymethylbilane + 4 NH4(+). The protein operates within porphyrin-containing compound metabolism; protoporphyrin-IX biosynthesis; coproporphyrinogen-III from 5-aminolevulinate: step 2/4. Tetrapolymerization of the monopyrrole PBG into the hydroxymethylbilane pre-uroporphyrinogen in several discrete steps. This chain is Porphobilinogen deaminase, found in Mycobacteroides abscessus (strain ATCC 19977 / DSM 44196 / CCUG 20993 / CIP 104536 / JCM 13569 / NCTC 13031 / TMC 1543 / L948) (Mycobacterium abscessus).